We begin with the raw amino-acid sequence, 446 residues long: MSSPTSSLDTPLPGNGSPQPSTSSTSPTIKEEGQETDPPPGSEGSSSAYIVVILEPEDEPERKRKKGPAPKMLGHELCRVCGDKASGFHYNVLSCEGCKGFFRRSVVHGGAGRYACRGSGTCQMDAFMRRKCQLCRLRKCKEAGMREQCVLSEEQIRKKKIQKQQQQQPPPPTEPASGSSARPAASPGTSEASSQGSGEGEGIQLTAAQELMIQQLVAAQLQCNKRSFSDQPKVTPWPLGADPQSRDARQQRFAHFTELAIISVQEIVDFAKQVPGFLQLGREDQIALLKASTIEIMLLETARRYNHETECITFLKDFTYSKDDFHRAGLQVEFINPIFEFSRAMRRLGLDDAEYALLIAINIFSADRPNVQEPSRVEALQQPYVEALLSYTRIKRPQDQLRFPRMLMKLVSLRTLSSVHSEQVFALRLQDKKLPPLLSEIWDVHE.

Positions 1–28 (MSSPTSSLDTPLPGNGSPQPSTSSTSPT) are enriched in low complexity. A disordered region spans residues 1–69 (MSSPTSSLDT…PERKRKKGPA (69 aa)). The tract at residues 1–76 (MSSPTSSLDT…GPAPKMLGHE (76 aa)) is transactivation AF-1; required for ligand-independent transactivation function. A DNA-binding region (nuclear receptor) is located at residues 75–152 (HELCRVCGDK…AGMREQCVLS (78 aa)). 2 NR C4-type zinc fingers span residues 78–98 (CRVC…CEGC) and 116–140 (CRGS…LRKC). Residues 160–201 (KIQKQQQQQPPPPTEPASGSSARPAASPGTSEASSQGSGEGE) are disordered. Positions 175–196 (PASGSSARPAASPGTSEASSQG) are enriched in low complexity. A transactivation AF-2; required for ligand-dependent transactivation function; mediates interaction with CCAR2 region spans residues 205–446 (LTAAQELMIQ…LLSEIWDVHE (242 aa)). The region spanning 208–446 (AQELMIQQLV…LLSEIWDVHE (239 aa)) is the NR LBD domain. Glycyl lysine isopeptide (Lys-Gly) (interchain with G-Cter in SUMO2) cross-links involve residues Lys395 and Lys433.

Belongs to the nuclear hormone receptor family. NR1 subfamily. In terms of assembly, forms a heterodimer with RXR. Interacts with CCAR2 (via N-terminus) in a ligand-independent manner. Interacts (when sumoylated) with GPS2; interaction with GPS2 onto hepatic acute phase protein promoters prevents N-Cor corepressor complex dissociation. Interacts with ABCA12 and ABCA1; this interaction is required for ABCA1 localization to the cell surface and is necessary for its normal activity and stability. Post-translationally, sumoylated by SUMO2 at Lys-395 and Lys-433 during the hepatic acute phase response, leading to promote interaction with GPS2 and prevent N-Cor corepressor complex dissociation.

The protein localises to the nucleus. Its function is as follows. Nuclear receptor that exhibits a ligand-dependent transcriptional activation activity. Binds preferentially to double-stranded oligonucleotide direct repeats having the consensus half-site sequence 5'-AGGTCA-3' and 4-nt spacing (DR-4). Regulates cholesterol uptake through MYLIP-dependent ubiquitination of LDLR, VLDLR and LRP8; DLDLR and LRP8. Interplays functionally with RORA for the regulation of genes involved in liver metabolism. Induces LPCAT3-dependent phospholipid remodeling in endoplasmic reticulum (ER) membranes of hepatocytes, driving SREBF1 processing and lipogenesis. Via LPCAT3, triggers the incorporation of arachidonate into phosphatidylcholines of ER membranes, increasing membrane dynamics and enabling triacylglycerols transfer to nascent very low-density lipoprotein (VLDL) particles. Via LPCAT3 also counteracts lipid-induced ER stress response and inflammation, likely by modulating SRC kinase membrane compartmentalization and limiting the synthesis of lipid inflammatory mediators. Plays an anti-inflammatory role during the hepatic acute phase response by acting as a corepressor: inhibits the hepatic acute phase response by preventing dissociation of the N-Cor corepressor complex. The protein is Oxysterols receptor LXR-beta (Nr1h2) of Rattus norvegicus (Rat).